The following is a 64-amino-acid chain: Alpha-conotoxin CnIA (64 aa).

Positions 1-21 (MGMRMMFTVFLLVVLTTTVVS) are cleaved as a signal peptide. Residues 22–47 (FPSDSASDGRDDEAKDERSDIYESKR) constitute a propeptide that is removed on maturation. Intrachain disulfides connect C51–C56 and C52–C62. Residue P54 is modified to 4-hydroxyproline; in CnIK; partial. C62 carries the cysteine amide modification.

This sequence belongs to the conotoxin A superfamily. In terms of tissue distribution, expressed by the venom duct.

The protein resides in the secreted. Functionally, alpha-conotoxins act on postsynaptic membranes, they bind to the nicotinic acetylcholine receptors (nAChR) and thus inhibit them. CnIA and CnIB block muscular nAChR alpha-1/gamma and alpha-1/delta subunits. This chain is Alpha-conotoxin CnIA, found in Conus consors (Singed cone).